A 363-amino-acid chain; its full sequence is UDP-N-acetylglucosamine--N-acetylmuramyl-(pentapeptide) pyrophosphoryl-undecaprenol N-acetylglucosamine transferase (363 aa).

UDP-N-acetyl-alpha-D-glucosamine-binding positions include Thr10–Gly12, Asn124, Ser195, and Gln295.

Belongs to the glycosyltransferase 28 family. MurG subfamily.

The protein resides in the cell membrane. The enzyme catalyses di-trans,octa-cis-undecaprenyl diphospho-N-acetyl-alpha-D-muramoyl-L-alanyl-D-glutamyl-meso-2,6-diaminopimeloyl-D-alanyl-D-alanine + UDP-N-acetyl-alpha-D-glucosamine = di-trans,octa-cis-undecaprenyl diphospho-[N-acetyl-alpha-D-glucosaminyl-(1-&gt;4)]-N-acetyl-alpha-D-muramoyl-L-alanyl-D-glutamyl-meso-2,6-diaminopimeloyl-D-alanyl-D-alanine + UDP + H(+). It functions in the pathway cell wall biogenesis; peptidoglycan biosynthesis. Its function is as follows. Cell wall formation. Catalyzes the transfer of a GlcNAc subunit on undecaprenyl-pyrophosphoryl-MurNAc-pentapeptide (lipid intermediate I) to form undecaprenyl-pyrophosphoryl-MurNAc-(pentapeptide)GlcNAc (lipid intermediate II). In Bacillus subtilis (strain 168), this protein is UDP-N-acetylglucosamine--N-acetylmuramyl-(pentapeptide) pyrophosphoryl-undecaprenol N-acetylglucosamine transferase.